Here is a 328-residue protein sequence, read N- to C-terminus: UPF0285 protein MJ1370 (328 aa).

The protein belongs to the UPF0285 family.

The chain is UPF0285 protein MJ1370 from Methanocaldococcus jannaschii (strain ATCC 43067 / DSM 2661 / JAL-1 / JCM 10045 / NBRC 100440) (Methanococcus jannaschii).